Here is a 439-residue protein sequence, read N- to C-terminus: Kinesin-like protein KIN-13 (439 aa).

Residue 1 to 5 (GSGKS) participates in ATP binding. The Kinesin motor domain maps to 1–240 (GSGKSFTMMH…LRYADRVKEL (240 aa)).

The protein belongs to the TRAFAC class myosin-kinesin ATPase superfamily. Kinesin family. KIN-13 subfamily. As to quaternary structure, interacts with PLK. In terms of processing, phosphorylated by PLK.

The protein localises to the cytoplasm. It is found in the cytoskeleton. Its subcellular location is the cell projection. It localises to the cilium. The protein resides in the flagellum. The protein localises to the flagellum basal body. It is found in the flagellum axoneme. Its subcellular location is the spindle. It localises to the chromosome. The protein resides in the centromere. The protein localises to the kinetochore. Involved in cell cycle. Involved in formation of flagella, regulation of flagellar length, and formation of median bodies during interphase. Regulates flagellar length in all eight distal flagellar tips by promoting disassembly of the microtubules. Disassembles microtubules at the distal flagellar tips in a length-dependent manner in order to maintain different equilibrium lengths of the four flagellar pairs. Regulates interphase and mitotic microtubule dynamics. Regulates microtubule disassembly dynamics of the dual mitotic spindles and the median body. This Giardia intestinalis (Giardia lamblia) protein is Kinesin-like protein KIN-13.